A 202-amino-acid chain; its full sequence is Alcohol dehydrogenase-related 31 kDa protein (202 aa).

11–34 (YVADCGGIALETSKVLMTKNIAKL) contributes to the NAD(+) binding site. Position 139 (S139) interacts with substrate. Y152 acts as the Proton acceptor in catalysis.

This sequence belongs to the short-chain dehydrogenases/reductases (SDR) family.

The sequence is that of Alcohol dehydrogenase-related 31 kDa protein (Adhr) from Drosophila erecta (Fruit fly).